We begin with the raw amino-acid sequence, 395 residues long: Neuromedin-U receptor 2 (395 aa).

Residues 1 to 41 lie on the Extracellular side of the membrane; the sequence is MGKLENASWIHDSLMKYLNSTEEYLAYLCGPKRSDLSLPVS. Residues Asn6 and Asn19 are each glycosylated (N-linked (GlcNAc...) asparagine). The helical transmembrane segment at 42–62 threads the bilayer; it reads VVYALIFVVGVIGNLLVCLVI. Residues 63–74 lie on the Cytoplasmic side of the membrane; sequence ARHQTLKTPTNY. Residues 75-95 form a helical membrane-spanning segment; sequence YLFSLAVSDLLVLLLGMPLEV. Topologically, residues 96–115 are extracellular; it reads YELWHNYPFLFGPVGCYFKT. Cys111 and Cys196 are oxidised to a cystine. The helical transmembrane segment at 116-138 threads the bilayer; that stretch reads ALFETVCFASILSVTTVSIERYV. Residues 139-157 are Cytoplasmic-facing; that stretch reads AIVHPFRAKLESTRRRALR. Residues 158 to 178 traverse the membrane as a helical segment; it reads ILSLVWSFSVVFSLPNTSIHG. Residues 179-212 are Extracellular-facing; the sequence is IKFQQFPNGSSVPGSATCTVTKPIWVYNFIIQAT. N-linked (GlcNAc...) asparagine glycosylation occurs at Asn186. The chain crosses the membrane as a helical span at residues 213–233; the sequence is SFLFYILPMTLISVLYYLMGL. Residues 234–257 lie on the Cytoplasmic side of the membrane; it reads RLKRDESLEADKVTVNIHRPSRKS. Residues 258-278 traverse the membrane as a helical segment; the sequence is VTKMLFVLVLVFAICWTPFHV. Residues 279–293 lie on the Extracellular side of the membrane; the sequence is DRLFFSFVDEWTESL. A helical transmembrane segment spans residues 294–314; it reads AAVFNLIHVVSGVFFYLSSAV. The Cytoplasmic segment spans residues 315-395; it reads NPIIYNLLSR…TTVPCVEEVP (81 aa).

It belongs to the G-protein coupled receptor 1 family. As to expression, expressed primarily in brain tissues, more specifically in medulla and spinal cord. Widespread distribution in peripheral tissues.

The protein resides in the cell membrane. In terms of biological role, receptor for the neuromedin-U and neuromedin-S neuropeptides. In Mus musculus (Mouse), this protein is Neuromedin-U receptor 2 (Nmur2).